The sequence spans 183 residues: uncharacterized protein (183 aa).

In terms of domain architecture, GGDEF spans 55–183; sequence PRAAVLLVDL…RSRRGSRPAR (129 aa).

Might be involved in pSAM2 replication control. This is an uncharacterized protein from Streptomyces ambofaciens.